A 282-amino-acid polypeptide reads, in one-letter code: Bis(5'-nucleosyl)-tetraphosphatase, symmetrical (282 aa).

The protein belongs to the Ap4A hydrolase family.

The catalysed reaction is P(1),P(4)-bis(5'-adenosyl) tetraphosphate + H2O = 2 ADP + 2 H(+). Its function is as follows. Hydrolyzes diadenosine 5',5'''-P1,P4-tetraphosphate to yield ADP. The polypeptide is Bis(5'-nucleosyl)-tetraphosphatase, symmetrical (Escherichia coli O7:K1 (strain IAI39 / ExPEC)).